Here is a 396-residue protein sequence, read N- to C-terminus: Ribosomal RNA large subunit methyltransferase I (396 aa).

A PUA domain is found at 2–79 (AIRIKLKPGR…REEEIDREFF (78 aa)).

This sequence belongs to the methyltransferase superfamily. RlmI family.

Its subcellular location is the cytoplasm. It carries out the reaction cytidine(1962) in 23S rRNA + S-adenosyl-L-methionine = 5-methylcytidine(1962) in 23S rRNA + S-adenosyl-L-homocysteine + H(+). Specifically methylates the cytosine at position 1962 (m5C1962) of 23S rRNA. This Shewanella baltica (strain OS155 / ATCC BAA-1091) protein is Ribosomal RNA large subunit methyltransferase I.